Consider the following 571-residue polypeptide: Isocitrate dehydrogenase kinase/phosphatase (571 aa).

Residues 318–324 (APGVRGM) and Lys-339 each bind ATP. Asp-374 is an active-site residue.

It belongs to the AceK family.

Its subcellular location is the cytoplasm. It catalyses the reaction L-seryl-[isocitrate dehydrogenase] + ATP = O-phospho-L-seryl-[isocitrate dehydrogenase] + ADP + H(+). Its function is as follows. Bifunctional enzyme which can phosphorylate or dephosphorylate isocitrate dehydrogenase (IDH) on a specific serine residue. This is a regulatory mechanism which enables bacteria to bypass the Krebs cycle via the glyoxylate shunt in response to the source of carbon. When bacteria are grown on glucose, IDH is fully active and unphosphorylated, but when grown on acetate or ethanol, the activity of IDH declines drastically concomitant with its phosphorylation. The polypeptide is Isocitrate dehydrogenase kinase/phosphatase (Pseudomonas entomophila (strain L48)).